A 142-amino-acid polypeptide reads, in one-letter code: Large ribosomal subunit protein uL11 (142 aa).

The protein belongs to the universal ribosomal protein uL11 family. As to quaternary structure, part of the ribosomal stalk of the 50S ribosomal subunit. Interacts with L10 and the large rRNA to form the base of the stalk. L10 forms an elongated spine to which L12 dimers bind in a sequential fashion forming a multimeric L10(L12)X complex. In terms of processing, one or more lysine residues are methylated.

Functionally, forms part of the ribosomal stalk which helps the ribosome interact with GTP-bound translation factors. This is Large ribosomal subunit protein uL11 from Bartonella bacilliformis (strain ATCC 35685 / KC583 / Herrer 020/F12,63).